A 479-amino-acid chain; its full sequence is Poly(A) polymerase catalytic subunit (479 aa).

Active-site residues include aspartate 202 and aspartate 204. Positions 202, 204, and 253 each coordinate Ca(2+).

The protein belongs to the poxviridae poly(A) polymerase catalytic subunit family. As to quaternary structure, heterodimer of a large (catalytic) subunit and a small (regulatory) subunit.

The enzyme catalyses RNA(n) + ATP = RNA(n)-3'-adenine ribonucleotide + diphosphate. Functionally, polymerase that creates the 3'-poly(A) tail of mRNA's. This Mus musculus (Mouse) protein is Poly(A) polymerase catalytic subunit (OPG063).